We begin with the raw amino-acid sequence, 226 residues long: Gap junction beta-2 protein (226 aa).

The stretch at 2–13 (DWGALQTILGGV) is an intramembrane region. At 14–20 (NKYSTSI) the chain is on the cytoplasmic side. The helical transmembrane segment at 21-40 (GKIWLTVLFIFRIMILVVAA) threads the bilayer. Topologically, residues 41-73 (KEVWGDEQADFVCNTLQPGCKNVCYDHYFPISH) are extracellular. Ca(2+)-binding residues include Glu42, Gly45, and Glu47. Disulfide bonds link Cys53-Cys180, Cys60-Cys174, and Cys64-Cys169. The helical transmembrane segment at 74 to 94 (IRLWALQLIFVSTPALLVAMH) threads the bilayer. Residues 95–135 (VAYRRHEKKRKFIKGEIKNEFKDIEEIKTQKVRIEGSLWWT) lie on the Cytoplasmic side of the membrane. The helical transmembrane segment at 136 to 156 (YTSSIFFRVVFEAAFMYVFYV) threads the bilayer. Residues 157 to 189 (MYDGFSMQRLVKCNAWPCPNTVDCFVSRPTEKT) are Extracellular-facing. Residues 190–210 (VFTVFMIAVSGICILLNVTEL) form a helical membrane-spanning segment. At 211–226 (CYLLIRYCSGKSKKPV) the chain is on the cytoplasmic side.

Belongs to the connexin family. Beta-type (group I) subfamily. In terms of assembly, a hemichannel or connexon is composed of a hexamer of connexins. A functional gap junction is formed by the apposition of two hemichannels. Forms heteromeric channels with GJB4. Interacts with CNST.

It is found in the cell membrane. The protein resides in the cell junction. Its subcellular location is the gap junction. Its function is as follows. Structural component of gap junctions. Gap junctions are dodecameric channels that connect the cytoplasm of adjoining cells. They are formed by the docking of two hexameric hemichannels, one from each cell membrane. Small molecules and ions diffuse from one cell to a neighboring cell via the central pore. This chain is Gap junction beta-2 protein (GJB2), found in Macaca mulatta (Rhesus macaque).